A 1150-amino-acid chain; its full sequence is PAN2-PAN3 deadenylation complex catalytic subunit PAN2 (1150 aa).

4 WD repeats span residues 26 to 67 (AHHS…MEFQ), 114 to 156 (GHVN…ITKE), 158 to 194 (PAPN…VINT), and 290 to 328 (GHTH…VSFV). Residues 326–471 (SFVDQGLPVE…IRTDIESLKS (146 aa)) are linker. A USP domain is found at 472 to 862 (VVPNMYHLFE…TPLVVMFQLK (391 aa)). Residues 911–1079 (AIDAEFVLAK…HDSIEDANTA (169 aa)) enclose the Exonuclease domain. Positions 913, 915, 1022, and 1075 each coordinate a divalent metal cation. Residues 1118-1150 (GQSAQRTETPPMVDDAQPGALLPYQPPELLQGS) are disordered.

It belongs to the peptidase C19 family. PAN2 subfamily. As to quaternary structure, forms a heterotrimer with an asymmetric homodimer of the regulatory subunit PAN3 to form the poly(A)-nuclease (PAN) deadenylation complex. The cofactor is a divalent metal cation.

It localises to the cytoplasm. It catalyses the reaction Exonucleolytic cleavage of poly(A) to 5'-AMP.. Positively regulated by the regulatory subunit PAN3. Functionally, catalytic subunit of the poly(A)-nuclease (PAN) deadenylation complex, one of two cytoplasmic mRNA deadenylases involved in mRNA turnover. PAN specifically shortens poly(A) tails of RNA and the activity is stimulated by poly(A)-binding protein PAB1. PAN deadenylation is followed by rapid degradation of the shortened mRNA tails by the CCR4-NOT complex. Deadenylated mRNAs are then degraded by two alternative mechanisms, namely exosome-mediated 3'-5' exonucleolytic degradation, or deadenylation-dependent mRNA decaping and subsequent 5'-3' exonucleolytic degradation by XRN1. May also be involved in post-transcriptional maturation of mRNA poly(A) tails. This Pyricularia oryzae (strain 70-15 / ATCC MYA-4617 / FGSC 8958) (Rice blast fungus) protein is PAN2-PAN3 deadenylation complex catalytic subunit PAN2.